Reading from the N-terminus, the 407-residue chain is D-3-phosphoglycerate dehydrogenase (407 aa).

NAD(+)-binding positions include 161–162 (HI), Asp181, 238–240 (ASR), and Asp264. The active site involves Arg240. Glu269 is an active-site residue. His292 serves as the catalytic Proton donor. 292–295 (HIGG) is an NAD(+) binding site. One can recognise an ACT domain in the interval 340 to 407 (RILNIHNNKP…PNSIKTRVLY (68 aa)).

It belongs to the D-isomer specific 2-hydroxyacid dehydrogenase family.

The catalysed reaction is (2R)-3-phosphoglycerate + NAD(+) = 3-phosphooxypyruvate + NADH + H(+). It carries out the reaction (R)-2-hydroxyglutarate + NAD(+) = 2-oxoglutarate + NADH + H(+). It participates in amino-acid biosynthesis; L-serine biosynthesis; L-serine from 3-phospho-D-glycerate: step 1/3. Functionally, catalyzes the reversible oxidation of 3-phospho-D-glycerate to 3-phosphonooxypyruvate, the first step of the phosphorylated L-serine biosynthesis pathway. Also catalyzes the reversible oxidation of 2-hydroxyglutarate to 2-oxoglutarate. The polypeptide is D-3-phosphoglycerate dehydrogenase (serA) (Dictyostelium discoideum (Social amoeba)).